The chain runs to 533 residues: MFPGARILATLTLALHLLHGAHAAIGPAGNMYIVNEDVSPDGFARSAVVARSVPATDPTPATASIPGVLVQGNKGDNFQLNVVNQLSDTTMLKTTSIHWHGFFQAGSSWADGPAFVTQCPVASGDSFLYNFNVPDQAGTFWYHSHLSTQYCDGLRGPFVVYDPSDPHLSLYDIDNADTVITLEDWYHIVAPQNAAIPTPDSTLINGKGRYAGGPTSPLAIINVESNKRYRFRLVSMSCDPNFTFSIDGHSLLVIEADAVNIVPITVDSIQIFAGQRYSFVLTANQAVDNYWIRANPNLGSTGFVGGINSAILRYAGATEDDPTTTSSTSTPLLETNLVPLENPGAPGPPVPGGADININLAMAFDFTTFELTINGVPFLPPTAPVLLQILSGASTAASLLPSGSIYELEANKVVEISMPALAVGGPHPFHLHGHTFDVIRSAGSTTYNFDTPARRDVVNTGTGANDNVTIRFVTDNPGPWFLHCHIDWHLEIGLAVVFAEDVTSISAPPAAWDDLCPIYNALSDNDKGGIVPS.

An N-terminal signal peptide occupies residues 1–23; sequence MFPGARILATLTLALHLLHGAHA. 3 Plastocyanin-like domains span residues 25-171, 173-336, and 382-501; these read IGPA…LSLY, IDNA…LETN, and TAPV…FAED. Residues His98, His100, His143, and His145 each contribute to the Cu cation site. 2 disulfide bridges follow: Cys119–Cys516 and Cys151–Cys238. Cu cation contacts are provided by His427, His430, and His432. A glycan (N-linked (GlcNAc...) (high mannose) asparagine) is linked at Asn467. His483, Cys484, His485, and His489 together coordinate Cu cation.

This sequence belongs to the multicopper oxidase family. Cu cation is required as a cofactor. N-glycosylated at Asn-467; contains a high-mannose glycan with a varying number of mannose residues.

It localises to the secreted. The catalysed reaction is 4 hydroquinone + O2 = 4 benzosemiquinone + 2 H2O. Lignin degradation and detoxification of lignin-derived products. This is Laccase-2 (POX2) from Pleurotus ostreatus (Oyster mushroom).